The sequence spans 544 residues: Putative pentatricopeptide repeat-containing protein At5g59200, chloroplastic (544 aa).

The disordered stretch occupies residues 1–21 (MISSLAAITGGPSTFRRDPDS). A chloroplast-targeting transit peptide spans 1–25 (MISSLAAITGGPSTFRRDPDSNTLR). PPR repeat units lie at residues 60 to 90 (DAFV…VSNP), 91 to 125 (NVYL…SVLP), 127 to 156 (NYVI…GFGS), 157 to 187 (SRSV…MPDR), 188 to 218 (DHVA…VKIK), 219 to 253 (DTVC…NVSA), 254 to 288 (NEFT…RMEL), 289 to 319 (SNFV…MRDK), 320 to 354 (DVIS…GFRP), 355 to 385 (NQVT…MKRV), and 391 to 421 (QIEH…IPIE). The interval 426–501 (MLGTLLSACK…EPGCSTIEVD (76 aa)) is type E motif. The segment at 502-532 (NQIHEFLVGDIAHPHKEAIYQRLQELNRILR) is type E(+) motif.

The protein belongs to the PPR family. PCMP-E subfamily.

It localises to the plastid. It is found in the chloroplast. Functionally, involved in RNA editing event in chloroplasts. Required for the editing of a single site in rpl23 transcript. This Arabidopsis thaliana (Mouse-ear cress) protein is Putative pentatricopeptide repeat-containing protein At5g59200, chloroplastic (PCMP-E41).